Reading from the N-terminus, the 435-residue chain is MESESESGAAADTPPLETLSFHGDEEIIEVVELDPGPPDPDDLAQEMEDVDFEEEEEEEEGNEEGWVLEPQEGVVGSMEGPDDSEVTFALHSASVFCVSLDPKTNTLAVTGGEDDKAFVWRLSDGELLFECAGHKDSVTCAGFSHDSTLVATGDMSGLLKVWQVDTKEEVWSFEAGDLEWMEWHPRAPVLLAGTADGNTWMWKVPNGDCKTFQGPNCPATCGRVLPDGKRAVVGYEDGTIRIWDLKQGSPIHVLKGTEGHQGPLTCVATNQDGSLILTGSVDCQAQLVSATTGKVVGVFRPETVASQPNVGEGEESESNSVESLGFCSVMPLAAVGYLDGTLAIYDLSTQTLRHQCQHQSGIVQLLWEAGTAVVYTCSLDGIVRLWDARTGRLLTDYRGHTAEILDFALSKDASLVVTTSGDHKAKVFCVQRPDR.

A disordered region spans residues 1-65 (MESESESGAA…EEEEEGNEEG (65 aa)). Ser-20 is modified (phosphoserine). The segment covering 39–63 (DPDDLAQEMEDVDFEEEEEEEEGNE) has biased composition (acidic residues). 8 WD repeats span residues 90-130 (LHSA…LLFE), 133-172 (GHKD…EVWS), 174-213 (EAGD…KTFQ), 215-255 (PNCP…HVLK), 259-300 (GHQG…GVFR), 316-355 (SESN…LRHQ), 357-396 (QHQS…LLTD), and 399-434 (GHTA…QRPD).

It localises to the cell membrane. It is found in the cytoplasm. In terms of biological role, plays a role in angiogenesis and cell migration. In smooth muscle cell migration, may act through the RhoA pathway. This Canis lupus familiaris (Dog) protein is Angio-associated migratory cell protein (AAMP).